A 457-amino-acid polypeptide reads, in one-letter code: ATP synthase subunit beta (457 aa).

147–154 (GGAGVGKT) provides a ligand contact to ATP.

The protein belongs to the ATPase alpha/beta chains family. In terms of assembly, F-type ATPases have 2 components, CF(1) - the catalytic core - and CF(0) - the membrane proton channel. CF(1) has five subunits: alpha(3), beta(3), gamma(1), delta(1), epsilon(1). CF(0) has three main subunits: a(1), b(2) and c(9-12). The alpha and beta chains form an alternating ring which encloses part of the gamma chain. CF(1) is attached to CF(0) by a central stalk formed by the gamma and epsilon chains, while a peripheral stalk is formed by the delta and b chains.

It localises to the cell inner membrane. The enzyme catalyses ATP + H2O + 4 H(+)(in) = ADP + phosphate + 5 H(+)(out). In terms of biological role, produces ATP from ADP in the presence of a proton gradient across the membrane. The catalytic sites are hosted primarily by the beta subunits. This is ATP synthase subunit beta from Histophilus somni (strain 2336) (Haemophilus somnus).